We begin with the raw amino-acid sequence, 60 residues long: Potassium channel toxin alpha-KTx 29.2 (60 aa).

Residues 1–28 form the signal peptide; the sequence is MKSVCGVLIILVVLTTMLSISTFSTVGA. Intrachain disulfides connect cysteine 32/cysteine 51, cysteine 40/cysteine 56, and cysteine 44/cysteine 58.

Belongs to the short scorpion toxin superfamily. Potassium channel inhibitor family. Alpha-KTx 29 subfamily. Expressed by the venom gland.

The protein localises to the secreted. Its function is as follows. Weakly inhibits the Kv1.3/KCNA3 channel (1 uM of thetoxin inhibits currents by 13.2%) and Kv7.1/KCNQ1 channel (10 uM of the toxin inhibits currents by 27.7%). This Lychas mucronatus (Chinese swimming scorpion) protein is Potassium channel toxin alpha-KTx 29.2.